Reading from the N-terminus, the 274-residue chain is MSHPYASPFAEVIGDPIAQSKSPLIHGFWLDALGMEGDYRRAHVKADALAAYIAERRADPGWRGCNVTMPHKAAVMDLVDDPGDIRGTIGAMNTIVRQPDGSLIGTNTDAAGFYSPLAELDLEGAPIAVVGAGGAARAVLFALARAKVGKVAILNRSPLKAMGLLATFGLKGDVVALDAALPPVRLLVNASSLGMAGQPPLDLDLSPLPDDAIVYDLVYSPLRTGLLKAAEARGLDTVDGLDMLIGQAALAFELFFGAPPPEGRDDELRALLVA.

Shikimate-binding positions include 20-22 (SKS) and Thr-68. Lys-72 functions as the Proton acceptor in the catalytic mechanism. Asp-84 contributes to the NADP(+) binding site. The shikimate site is built by Asn-93 and Asp-109. NADP(+) contacts are provided by residues 131 to 135 (GAGGA) and Leu-217. Residue Tyr-219 coordinates shikimate. Gly-240 is a binding site for NADP(+).

Belongs to the shikimate dehydrogenase family. In terms of assembly, homodimer.

It catalyses the reaction shikimate + NADP(+) = 3-dehydroshikimate + NADPH + H(+). The protein operates within metabolic intermediate biosynthesis; chorismate biosynthesis; chorismate from D-erythrose 4-phosphate and phosphoenolpyruvate: step 4/7. Functionally, involved in the biosynthesis of the chorismate, which leads to the biosynthesis of aromatic amino acids. Catalyzes the reversible NADPH linked reduction of 3-dehydroshikimate (DHSA) to yield shikimate (SA). The chain is Shikimate dehydrogenase (NADP(+)) from Sphingopyxis alaskensis (strain DSM 13593 / LMG 18877 / RB2256) (Sphingomonas alaskensis).